We begin with the raw amino-acid sequence, 167 residues long: Probable glutathione peroxidase 8 (167 aa).

Residue cysteine 41 is part of the active site.

This sequence belongs to the glutathione peroxidase family.

It carries out the reaction 2 glutathione + H2O2 = glutathione disulfide + 2 H2O. In terms of biological role, may constitute a glutathione peroxidase-like protective system against oxidative stresses. The sequence is that of Probable glutathione peroxidase 8 (GPX8) from Arabidopsis thaliana (Mouse-ear cress).